A 240-amino-acid polypeptide reads, in one-letter code: Ribosome maturation protein SDO1 homolog (240 aa).

It belongs to the SDO1/SBDS family.

This Methanocaldococcus jannaschii (strain ATCC 43067 / DSM 2661 / JAL-1 / JCM 10045 / NBRC 100440) (Methanococcus jannaschii) protein is Ribosome maturation protein SDO1 homolog.